A 159-amino-acid chain; its full sequence is Probable metallophosphoesterase MPN_126 (159 aa).

Residues Asp-9, His-11, Asp-34, Asn-53, His-75, His-107, and His-109 each coordinate Mn(2+).

The protein belongs to the metallophosphoesterase superfamily. YfcE family. Mn(2+) serves as cofactor.

The polypeptide is Probable metallophosphoesterase MPN_126 (Mycoplasma pneumoniae (strain ATCC 29342 / M129 / Subtype 1) (Mycoplasmoides pneumoniae)).